A 514-amino-acid polypeptide reads, in one-letter code: Putative ankyrin repeat protein R863 (514 aa).

ANK repeat units follow at residues 45-74, 84-114, 115-144, 146-174, 176-204, 205-234, 236-264, 266-294, 295-324, 325-354, 356-384, 385-414, 415-444, 446-474, and 476-504; these read AKID…LKHP, KSLN…DINS, KKNR…DVRA, KDYA…NIKV, DNFA…NIRA, DNNY…DIRA, NNYA…NVKS, NDCA…DVRS, ENDY…NVRA, DNNY…NIRS, NDYA…NFKS, DYDC…DIRV, NNDY…DIRA, NDYA…NVKA, and NNYA…DVRS.

The polypeptide is Putative ankyrin repeat protein R863 (Acanthamoeba polyphaga mimivirus (APMV)).